Consider the following 597-residue polypeptide: Blastula protease 10 (597 aa).

Positions 1-16 are cleaved as a signal peptide; the sequence is MKLILFLSGLVSLVLC. Residues 17-93 constitute a propeptide, activation peptide; the sequence is TLAAPTGDQK…DEMTGRKKRK (77 aa). Residues 24–67 are disordered; that stretch reads DQKEIHTETPPPKKPSETTTPGALKTPQPEPKDEEPTPGAFQGD. Residues 93-294 form the Peptidase M12A domain; sequence KATIYESQRW…ELANLIYECD (202 aa). Disulfide bonds link C134–C293, C162–C182, C299–C315, C305–C317, C319–C328, C339–C365, C392–C412, C484–C510, and C537–C557. H190 provides a ligand contact to Zn(2+). Residue E191 is part of the active site. Positions 194 and 200 each coordinate Zn(2+). The EGF-like domain maps to 295–329; it reads DIEDCAGANECLNGGYHDTECNCVCPSGYNGDLCE. CUB domains follow at residues 339–449 and 484–595; these read CSER…YRIV and CGGS…YRAI.

Zn(2+) serves as cofactor.

It is found in the cytoplasm. Its subcellular location is the perinuclear region. The protein localises to the cell cortex. It localises to the secreted. The protein resides in the extracellular space. Functionally, could be involved in the differentiation of ectodermal lineages and subsequent patterning of the embryo. This Paracentrotus lividus (Common sea urchin) protein is Blastula protease 10 (BP10).